The primary structure comprises 243 residues: Uridylate kinase (243 aa).

Residue 15–18 participates in ATP binding; the sequence is KLSG. The segment at 23-28 is involved in allosteric activation by GTP; it reads GEEGFG. Glycine 57 is a UMP binding site. ATP contacts are provided by glycine 58 and arginine 62. Residues aspartate 77 and 138-145 each bind UMP; that span reads TGNPFFTT. The ATP site is built by threonine 165, phenylalanine 171, and aspartate 174.

The protein belongs to the UMP kinase family. In terms of assembly, homohexamer.

The protein localises to the cytoplasm. It catalyses the reaction UMP + ATP = UDP + ADP. Its pathway is pyrimidine metabolism; CTP biosynthesis via de novo pathway; UDP from UMP (UMPK route): step 1/1. Its activity is regulated as follows. Allosterically activated by GTP. Inhibited by UTP. In terms of biological role, catalyzes the reversible phosphorylation of UMP to UDP. This is Uridylate kinase from Vibrio campbellii (strain ATCC BAA-1116).